The following is a 200-amino-acid chain: ATP-dependent Clp protease proteolytic subunit (200 aa).

The Nucleophile role is filled by Ser-97. Residue His-122 is part of the active site.

This sequence belongs to the peptidase S14 family. In terms of assembly, fourteen ClpP subunits assemble into 2 heptameric rings which stack back to back to give a disk-like structure with a central cavity, resembling the structure of eukaryotic proteasomes.

The protein resides in the cytoplasm. It catalyses the reaction Hydrolysis of proteins to small peptides in the presence of ATP and magnesium. alpha-casein is the usual test substrate. In the absence of ATP, only oligopeptides shorter than five residues are hydrolyzed (such as succinyl-Leu-Tyr-|-NHMec, and Leu-Tyr-Leu-|-Tyr-Trp, in which cleavage of the -Tyr-|-Leu- and -Tyr-|-Trp bonds also occurs).. In terms of biological role, cleaves peptides in various proteins in a process that requires ATP hydrolysis. Has a chymotrypsin-like activity. Plays a major role in the degradation of misfolded proteins. The protein is ATP-dependent Clp protease proteolytic subunit of Oleidesulfovibrio alaskensis (strain ATCC BAA-1058 / DSM 17464 / G20) (Desulfovibrio alaskensis).